The primary structure comprises 954 residues: Glycine dehydrogenase (decarboxylating) (954 aa).

Lysine 706 bears the N6-(pyridoxal phosphate)lysine mark.

Belongs to the GcvP family. In terms of assembly, the glycine cleavage system is composed of four proteins: P, T, L and H. Requires pyridoxal 5'-phosphate as cofactor.

The catalysed reaction is N(6)-[(R)-lipoyl]-L-lysyl-[glycine-cleavage complex H protein] + glycine + H(+) = N(6)-[(R)-S(8)-aminomethyldihydrolipoyl]-L-lysyl-[glycine-cleavage complex H protein] + CO2. Functionally, the glycine cleavage system catalyzes the degradation of glycine. The P protein binds the alpha-amino group of glycine through its pyridoxal phosphate cofactor; CO(2) is released and the remaining methylamine moiety is then transferred to the lipoamide cofactor of the H protein. The chain is Glycine dehydrogenase (decarboxylating) from Pseudomonas syringae pv. tomato (strain ATCC BAA-871 / DC3000).